Here is a 122-residue protein sequence, read N- to C-terminus: Large ribosomal subunit protein uL14 (122 aa).

This sequence belongs to the universal ribosomal protein uL14 family. As to quaternary structure, part of the 50S ribosomal subunit. Forms a cluster with proteins L3 and L19. In the 70S ribosome, L14 and L19 interact and together make contacts with the 16S rRNA in bridges B5 and B8.

Functionally, binds to 23S rRNA. Forms part of two intersubunit bridges in the 70S ribosome. This chain is Large ribosomal subunit protein uL14, found in Rickettsia felis (strain ATCC VR-1525 / URRWXCal2) (Rickettsia azadi).